We begin with the raw amino-acid sequence, 296 residues long: MFKSGFITIVGRPNVGKSTLTNLLMGEKLSIVSNKPQTTRNNIQTILTGDDYQMIFVDTPGIHKPKHKLGEYMVNSATDSIKDVDLVLFLSNPCEEVGRGDKFIVEQLKNQKAPVIFVLNKVDESSPEKVAKTLELFSKEYDFAEMIPISAMKAKNTDKLLELMVKYLPEGPKYYPDDMITDVQERFVVAEIVREKALKNLSQEVPHGIAVDVIQMKQDDNGKYNIEVDLICEKASHKGIIIGKNGQTLKKIGSTARYELERFLRAKVNIKIWVKVRKEWRDNTSLLKELGYKKLK.

The Era-type G domain occupies Lys3–Glu170. A G1 region spans residues Gly11 to Ser18. Position 11–18 (Gly11–Ser18) interacts with GTP. Residues Gln37–Asn41 are G2. Residues Asp58–Gly61 form a G3 region. GTP contacts are provided by residues Asp58–Ile62 and Asn120–Asp123. The segment at Asn120 to Asp123 is G4. Positions Ile149 to Ala151 are G5. Residues Leu201–Lys278 form the KH type-2 domain.

It belongs to the TRAFAC class TrmE-Era-EngA-EngB-Septin-like GTPase superfamily. Era GTPase family. In terms of assembly, monomer.

It is found in the cytoplasm. It localises to the cell membrane. An essential GTPase that binds both GDP and GTP, with rapid nucleotide exchange. Plays a role in 16S rRNA processing and 30S ribosomal subunit biogenesis and possibly also in cell cycle regulation and energy metabolism. This chain is GTPase Era, found in Clostridium perfringens (strain 13 / Type A).